The sequence spans 758 residues: Maturase-like protein 2 (758 aa).

Its subcellular location is the plastid. It is found in the chloroplast. The polypeptide is Maturase-like protein 2 (mat2) (Euglena gracilis).